Here is a 156-residue protein sequence, read N- to C-terminus: Arginine repressor (156 aa).

This sequence belongs to the ArgR family.

The protein resides in the cytoplasm. The protein operates within amino-acid biosynthesis; L-arginine biosynthesis [regulation]. Regulates arginine biosynthesis genes. The polypeptide is Arginine repressor (Klebsiella pneumoniae (strain 342)).